We begin with the raw amino-acid sequence, 294 residues long: UDP-3-O-acyl-N-acetylglucosamine deacetylase (294 aa).

Zn(2+) is bound by residues His75, His232, and Asp236. His259 (proton donor) is an active-site residue.

It belongs to the LpxC family. The cofactor is Zn(2+).

The enzyme catalyses a UDP-3-O-[(3R)-3-hydroxyacyl]-N-acetyl-alpha-D-glucosamine + H2O = a UDP-3-O-[(3R)-3-hydroxyacyl]-alpha-D-glucosamine + acetate. It participates in glycolipid biosynthesis; lipid IV(A) biosynthesis; lipid IV(A) from (3R)-3-hydroxytetradecanoyl-[acyl-carrier-protein] and UDP-N-acetyl-alpha-D-glucosamine: step 2/6. In terms of biological role, catalyzes the hydrolysis of UDP-3-O-myristoyl-N-acetylglucosamine to form UDP-3-O-myristoylglucosamine and acetate, the committed step in lipid A biosynthesis. The polypeptide is UDP-3-O-acyl-N-acetylglucosamine deacetylase (Campylobacter lari (strain RM2100 / D67 / ATCC BAA-1060)).